We begin with the raw amino-acid sequence, 114 residues long: MARLRIINFYRSAYCSAMSEFRLPGEGEILGKVIEMLGDGRFKVICADGQIRVARLPGRLRRRLWLKAGDYVIVALWDFDREKGDIVHKYEKRDVEELKRRGFAEAIEALDSYA.

One can recognise an S1-like domain in the interval 19–91 (SEFRLPGEGE…EKGDIVHKYE (73 aa)).

It belongs to the eIF-1A family.

Functionally, seems to be required for maximal rate of protein biosynthesis. Enhances ribosome dissociation into subunits and stabilizes the binding of the initiator Met-tRNA(I) to 40 S ribosomal subunits. The chain is Translation initiation factor 1A (eIF1A) from Pyrobaculum aerophilum (strain ATCC 51768 / DSM 7523 / JCM 9630 / CIP 104966 / NBRC 100827 / IM2).